Reading from the N-terminus, the 327-residue chain is Altered inheritance rate of mitochondria protein 25 (327 aa).

It belongs to the phospholipid scramblase family.

Its subcellular location is the mitochondrion. The sequence is that of Altered inheritance rate of mitochondria protein 25 (AIM25) from Saccharomyces cerevisiae (strain ATCC 204508 / S288c) (Baker's yeast).